A 1162-amino-acid polypeptide reads, in one-letter code: MTDVNCLTSEHIAPTTTTASPPGTPSKNAATDPVEPTSPFVLRAPPSAKSKLILQNMEEVLNSVKQKHREKHKRKREEKRRAALMEDQKSTTEEVKANAKEKPQPLREKSSQENGLKNGRRRSSPLKSSTPVADNQSIMKHFAKAGKPENVGVSPVSTAKPKPTTNVFEFMMNARNRSLGVNEGGAESPADQEIGSEAATPTTKRKLLLQEWNERKGGAKRRLADEARGEFIELQMEQRAKRLRKMLTKTDAKEVTAPSSAPTDPTVKRLRGRPRSRRISSMDAQNQIVESKPPVVKAKDQDPGTEELLSKLSSPTKKRDSLLGYFPKVESPKELAEKVIIAIETPPMETPKRRTLRRKSQQETPIVAESTPSSRPRRSCVGKARYDYDLETSPGKQQKAKPQKADESVEIIDLDNSNPAATPKKLAPLFVRQLPKPSPDPSVLKARQAFLQSGVPDKIRQEQIRQKNFDQMYEDSYEVFPRLAHIGCESFGSKNGPLDIPFALRAEEEYSEVTKALPANKRRAKASSITSCLPADFTSSKTLNKFNYATLPQLENKRGFVKLWKNDFDRFPTFKCYNQMREKYRHFSAIDSAQDTQQMGESLVVTRRTRRSMEQNMAQNEEEAKPPPSAPNGELLFTEKYKPLLFEQVLVNLTPVQELREFLSSWSGNGGSNRNSQGMDDTFDMSNDSASMGSSSNTMVLVGPSSSGKTNAVFTLANDMNFNVLEINAGMKRTGKKLIQELQEATQSHQIRKDGKAGGGSSQQLLQKLQKSGLKAKAAAVEPPSEVRKSLILIEDADILFDNLDAGFTDAIYTLAASSKRPVIVVATDPNCAHLQRLMQQNIIHFQAPNALNISRFLAVLSLMENCPIELDELISVYLYNQQNLRKTLMELQFYIQSGGDSTRDRTGGGIKSPTKTSNSRLATVDGSRIHQRFFEFFTSPQNVQYRIPFPVDFSLLRLNLPDLMASSAMLKEQQAAGGGSRTAAKRKSRSPKKAWLSSATGQKSDGHSSSLATLASFYDNISVASLMDSDCSDRLQWHLSEEIGHLLVEQALQTGLATKECPYNLFDKPVQRFSICQHLGNGVLRSDSAKSLDFEPALRSICRSEKERAGLERKSSRFYHYLRNHTVNVTSFTTDYFDTACSTFQSAAPSSEPTMEAEPKD.

7 disordered regions span residues 1 to 136, 144 to 163, 179 to 202, 249 to 319, 348 to 380, 611 to 634, and 666 to 697; these read MTDV…ADNQ, KAGKPENVGVSPVSTAKPKP, LGVNEGGAESPADQEIGSEAATPT, KTDA…TKKR, METPKRRTLRRKSQQETPIVAESTPSSRPRRSC, RSMEQNMAQNEEEAKPPPSAPNGE, and WSGNGGSNRNSQGMDDTFDMSNDSASMGSSSN. Positions 65–78 are enriched in basic residues; that stretch reads KQKHREKHKRKREE. Residues 79-111 show a composition bias toward basic and acidic residues; it reads KRRAALMEDQKSTTEEVKANAKEKPQPLREKSS. The span at 125–136 shows a compositional bias: polar residues; that stretch reads PLKSSTPVADNQ. The segment covering 268–278 has biased composition (basic residues); the sequence is KRLRGRPRSRR. 2 stretches are compositionally biased toward low complexity: residues 666–676 and 684–697; these read WSGNGGSNRNS and DMSNDSASMGSSSN. 703–710 contributes to the ATP binding site; the sequence is GPSSSGKT. 2 disordered regions span residues 900 to 923 and 975 to 1008; these read GDSTRDRTGGGIKSPTKTSNSRLA and QAAGGGSRTAAKRKSRSPKKAWLSSATGQKSDGH. The span at 984–993 shows a compositional bias: basic residues; sequence AAKRKSRSPK. Residues 998–1008 show a composition bias toward polar residues; sequence SSATGQKSDGH.

It belongs to the ELG1 family. Component of a heteropentameric Elg1 RFC-like complex composed of one large subunit (elg1) and four small subunits (RfC4, RfC38, CG8142 and RfC3). As part of the complex, might interact with the Enok complex, composed of enok, Br140, Eaf6 and Ing5. Within the Enok complex, interacts directly with Br140. Expressed at higher levels in the germline nurse cells than in the somatic follicle cells.

It is found in the nucleus. In terms of biological role, has an important role in DNA replication and in maintaining genome integrity during replication stress. Promotes PCNA deubiquitination. As component of the Elg1 RFC-like complex, regulates the functions of the DNA polymerase processivity factor PCNA by unloading it from DNA after replication during the S phase of the cell cycle. The PCNA-unloading might be regulated via interaction with the Enok acetyltransferase complex. Might have a role in restarting of stalled/regressed replication forks during replication stress. In the ovaries, has a role in nurse cell endoreplication. The chain is Enhanced level of genomic instability 1 from Drosophila melanogaster (Fruit fly).